The primary structure comprises 131 residues: Large ribosomal subunit protein bL17 (131 aa).

Belongs to the bacterial ribosomal protein bL17 family. Part of the 50S ribosomal subunit. Contacts protein L32.

This chain is Large ribosomal subunit protein bL17, found in Sodalis glossinidius (strain morsitans).